Reading from the N-terminus, the 909-residue chain is E3 ubiquitin-protein ligase HACE1 (909 aa).

Residues 1-21 are N-terminal helix important for homodimerization; it reads MERAMEQLNRLTRSLRRARTV. ANK repeat units lie at residues 23–55, 64–93, 97–126, 130–159, 163–192, 196–226, and 228–253; these read LPED…NSKF, VKRS…NPNY, SGCT…DVNI, EGLT…DVDV, MGQT…DINR, SGAT…YLPD, and NGVT…QYHP. Residues 398–433 are disordered; the sequence is QDQEAPSLSAFEPPGPGSYESLPPGPGDSKPEVLAG. Positions 574-909 constitute an HECT domain; the sequence is NCAKLKQGIA…HCGSYGYTMA (336 aa). Cys-876 functions as the Glycyl thioester intermediate in the catalytic mechanism.

As to quaternary structure, homodimer. The homodimer is autoinhibited and stabilized by its N-terminal helix. Interacts with RAB1 (RAB1A, RAB1B or RAB1C), RAB4 (RAB4A or RAB4B) and RAB11 (RAB11A or RAB11B); in a GTP-dependent manner. Interacts with the 26S proteasomal complex through the 20S core proteasomal subunit. Interacts with RARB. In terms of processing, autoubiquitinated.

It localises to the golgi apparatus. The protein resides in the golgi stack membrane. Its subcellular location is the cytoplasm. The protein localises to the endoplasmic reticulum. It carries out the reaction S-ubiquitinyl-[E2 ubiquitin-conjugating enzyme]-L-cysteine + [acceptor protein]-L-lysine = [E2 ubiquitin-conjugating enzyme]-L-cysteine + N(6)-ubiquitinyl-[acceptor protein]-L-lysine.. It participates in protein modification; protein ubiquitination. With respect to regulation, sterically autoinhibited in its dimeric state. In terms of biological role, E3 ubiquitin-protein ligase involved in Golgi membrane fusion and regulation of small GTPases. Acts as a regulator of Golgi membrane dynamics during the cell cycle: recruited to Golgi membrane by Rab proteins and regulates postmitotic Golgi membrane fusion. Acts by mediating ubiquitination during mitotic Golgi disassembly, ubiquitination serving as a signal for Golgi reassembly later, after cell division. Specifically binds GTP-bound RAC1, mediating ubiquitination and subsequent degradation of active RAC1, thereby playing a role in host defense against pathogens. May also act as a transcription regulator via its interaction with RARB. The protein is E3 ubiquitin-protein ligase HACE1 (Hace1) of Mus musculus (Mouse).